We begin with the raw amino-acid sequence, 617 residues long: Chitin elicitor receptor kinase 1 (617 aa).

Residues 1-23 (MKLKISLIAPILLLFSFFFAVES) form the signal peptide. Topologically, residues 24 to 232 (KCRTSCPLAL…KSSKQDGVGA (209 aa)) are extracellular. 3 disulfides stabilise this stretch: Cys25–Cys93, Cys29–Cys155, and Cys91–Cys153. Asn40, Asn52, and Asn102 each carry an N-linked (GlcNAc...) asparagine glycan. Residues 46-74 (VINQNLNSSIAPYDQINFDPILRYNSNIK) enclose the LysM 1; degenerate domain. The LysM 2; degenerate domain maps to 108-140 (RQEDTYERVAISNYANLTTMESLQARNPFPATN). 109-115 (QEDTYER) contacts chitin. Residue Asn123 is glycosylated (N-linked (GlcNAc...) asparagine). 137–143 (PATNIPL) lines the chitin pocket. N-linked (GlcNAc...) asparagine glycosylation is present at Asn152. Residues 168–211 (VTYPLRPEDSLSSIARSSGVSADILQRYNPGVNFNSGNGIVYVP) enclose the LysM 3 domain. The helical transmembrane segment at 233 to 253 (GVIAGIVIGVIVALLLILFIV) threads the bilayer. The Cytoplasmic segment spans residues 254-617 (YYAYRKNKSK…EDLVSLMSGR (364 aa)). 3 positions are modified to phosphoserine: Ser266, Ser268, and Ser274. Residues 322–594 (FNLSFKIGQG…YIVVALSTLF (273 aa)) enclose the Protein kinase domain. ATP is bound by residues 328-336 (IGQGGFGAV) and Lys349. Phosphotyrosine is present on Tyr390. The active-site Proton acceptor is the Asp441. A phosphothreonine mark is found at Thr479 and Thr519.

It belongs to the protein kinase superfamily. Ser/Thr protein kinase family. In terms of assembly, forms homodimers and homooligomers. Homodimerization is required to trigger plant defenses. Binds to chitin, chitosan and chito-oligomer oligosaccharide elicitors. Interaction with chitin octamer (NAG(8)) promotes homodimerization while shorter chitin oligomers inhibit homodimerization. Interacts with Pseudomonas syringae hopAB2/avrPtoB. Interacts (preferentially when unphosphorylated) with PBL27 at the plasma membrane. Binds to IOS1. Post-translationally, autophosphorylated. Autophosphorylation is induced by chitin and derivatives. In terms of processing, ubiquitinated and targeted to the proteasome by hopAB2/avrPtoB of Pseudomonas syringae pv. tomato DC3000. Expressed ubiquitously, with lowest expression in pollen.

It localises to the cell membrane. It carries out the reaction L-seryl-[protein] + ATP = O-phospho-L-seryl-[protein] + ADP + H(+). It catalyses the reaction L-threonyl-[protein] + ATP = O-phospho-L-threonyl-[protein] + ADP + H(+). Its activity is regulated as follows. Activated by chitin-mediated homodimerization. Functionally, lysin motif (LysM) receptor kinase that functions as a cell surface receptor in chitin elicitor (chitooligosaccharides) signaling leading to innate immunity toward both biotic and abiotic stresses (e.g. tolerance to salinity, heavy-metal stresses, and Botrytis cinerea infection). Recognizes microbe-derived N-acetylglucosamine (NAG)-containing ligands. Involved in the resistance to pathogenic fungi Alternaria brassicicola and Erysiphe cichoracearum, probably by sensing microbe-associated molecular patterns (MAMP) and pathogen-associated molecular patterns (PAMP). Plays an essential role in detecting peptidoglycans (e.g. PGNs) and restricting bacterial growth. Target of the bacterial type III effector E3-ligase protein hopAB2/avrPtoB of Pseudomonas syringae pv. tomato DC3000 that mediates ubiquitination and subsequent proteolysis, thus blocking all defense responses by suppressing PAMP-triggered immunity (PTI). Mediates chitin-induced phosphorylation of PBL27. This chain is Chitin elicitor receptor kinase 1 (CERK1), found in Arabidopsis thaliana (Mouse-ear cress).